An 867-amino-acid polypeptide reads, in one-letter code: Dynamin-1 (867 aa).

One can recognise a Dynamin-type G domain in the interval 28–294; sequence DLDLPQIAVV…LTNHIRDTLP (267 aa). The segment at 38 to 45 is G1 motif; sequence GGQSAGKS. GDP is bound by residues serine 41, glycine 43, lysine 44, serine 45, serine 46, arginine 59, and glycine 60. The interval 64-66 is G2 motif; it reads VTR. Position 80 is a phosphotyrosine (tyrosine 80). Tyrosine 125 is subject to 3'-nitrotyrosine; alternate. Phosphotyrosine; alternate is present on tyrosine 125. Positions 136-139 are G3 motif; that stretch reads DLPG. Residues 205-208 form a G4 motif region; it reads TKLD. GDP is bound by residues lysine 206, aspartate 208, aspartate 211, asparagine 236, arginine 237, and glutamine 239. The interval 235–238 is G5 motif; sequence VNRS. Phosphoserine occurs at positions 306 and 347. At tyrosine 354 the chain carries Phosphotyrosine. The residue at position 512 (serine 512) is a Phosphoserine. The PH domain occupies 515–625; the sequence is QDEILVIRKG…WKASFLRAGV (111 aa). A GED domain is found at 659-750; that stretch reads VETIRNLVDS…IIGDINTTTV (92 aa). The interval 767–867 is disordered; the sequence is SVPAGRRSPT…HENRAGKARL (101 aa). Phosphoserine is present on residues serine 774 and serine 778. Arginine 796 is modified (omega-N-methylarginine). Serine 822 carries the phosphoserine modification. Pro residues predominate over residues 825 to 843; sequence PFGPPPQVPSRPNRAPPGV. A phosphoserine mark is found at glycine 847, leucine 851, and lysine 857. The segment covering 856 to 867 has biased composition (basic and acidic residues); it reads GKHENRAGKARL.

This sequence belongs to the TRAFAC class dynamin-like GTPase superfamily. Dynamin/Fzo/YdjA family. As to quaternary structure, homodimer; homodimerization is mediated by the dynamin-type G domain which promotes assembly-stimulated GTPase activity. Homo-tetramer formed from two dimers in the absence of lipid. Oligomerizes into a helical polymer that self-assembles around the vesicle membrane, when associated to the menbrane through lipid binding. Interacts (via C-terminal proline-rich domain (PRD)) with SNX9 (via SH3 domain); this interaction allows regulation of DNM1 self-assembly during late stages of endocytic vesicle formation and supports DNM1's early functions in accelerating clathrin-coated pits (CCPs) maturation in non neuronals cell. Interacts (via C-terminal proline-rich domain (PRD)) with MYO1E (via SH3 domain); this interaction regulates receptor-mediated endocytosis. Interacts with SNX33 (via SH3 domain); this interaction decreases DNM1-dependent endocytosis. Interacts with DIAPH1. Interacts with GRB2 (via SH3 domain); this interaction mediates disassembly of DNM1 polymers, therefore modulates self-assembly. Forms a complex with BIN1 (via SH3 domain) and SH3GL2 (via SH3 domain). Forms a complex with SH3GL2 (via SH3 domain) and AMPH (via SH3 domain). Forms a complex with SH3GL2 (via SH3 domain) and SYNJ1. Interacts (via C-terminal proline-rich domain (PRD)) with SYT1; this interaction facilitates vesicle fission during clathrin-mediated endocytosis (CME). Interacts (via C-terminal proline-rich domain (PRD)) with PLCG1 (via SH3 domain); this interaction stimulates the release of GDP from DNM1 and enhances DNM1-dependent endocytosis. Interacts with SNPH; this interaction inhibits the binding of DNM1 to AMPH and DNM1-receptor-mediated endocytosis. Interacts with CAV1. Interacts with SH3GLB1 (via SH3 domain). Interacts with PACSIN1 (via SH3 domain), PACSIN2 (via SH3 domain) and PACSIN3 (via SH3 domain). Interacts with UNC119; this interaction decreases DNM1's GTPase activity and affects DNM1's interaction with AMPH. Interacts with AMPH. Interacts (GTP-bound form) with DNAJC6; this interaction allows clathrin-coated vesicle (CCV) formation at the plasma membrane. Phosphorylation at Ser-774 by GSK3B/GSK3-beta leads to inactivation of receptor-mediated endocytosis in non-neuronal cells. Dephosphorylation at Ser-774, through the EGFR downstream signaling, leads to activation and regulates early stages of clathrin-mediated endocytosis (CME). Phosphorylated on Tyr in response to EGF stimulation in cells expressing truncated EGFR. Phosphorylated by CDK5 leading to synaptic vesicle endocytosis (SVE) activation. In terms of tissue distribution, expressed exclusively in the brain.

The protein resides in the cell membrane. The protein localises to the membrane. It localises to the clathrin-coated pit. Its subcellular location is the cytoplasmic vesicle. It is found in the presynapse. The protein resides in the secretory vesicle. The protein localises to the chromaffin granule. It catalyses the reaction GTP + H2O = GDP + phosphate + H(+). Catalyzes the hydrolysis of GTP and utilizes this energy to mediate vesicle scission and participates in many forms of endocytosis, such as clathrin-mediated endocytosis or synaptic vesicle endocytosis as well as rapid endocytosis (RE). Associates to the membrane, through lipid binding, and self-assembles into rings and stacks of interconnected rings through oligomerization to form a helical polymer around the vesicle membrane leading to constriction of invaginated coated pits around their necks. Self-assembly of the helical polymer induces membrane tubules narrowing until the polymer reaches a length sufficient to trigger GTP hydrolysis. Depending on the curvature imposed on the tubules, membrane detachment from the helical polymer upon GTP hydrolysis can cause spontaneous hemifission followed by complete fission. May play a role in regulating early stages of clathrin-mediated endocytosis in non-neuronal cells through its activation by dephosphorylation via the signaling downstream of EGFR. Controls vesicle size at a step before fission, during formation of membrane pits, at hippocampal synapses. Controls plastic adaptation of the synaptic vesicle recycling machinery to high levels of activity. Mediates rapid endocytosis (RE), a Ca(2+)-dependent and clathrin- and K(+)-independent process in chromaffin cells. Microtubule-associated force-producing protein involved in producing microtubule bundles and able to bind and hydrolyze GTP. Through its interaction with DNAJC6, acts during the early steps of clathrin-coated vesicle (CCV) formation. The protein is Dynamin-1 of Mus musculus (Mouse).